The sequence spans 103 residues: MYAVFQSGGKQHRVSEGQVVRLEKLEIATGEKFEFDSVLMVVNGEDVKIGAPVVAGAKVVAEVVAQGRGDKVKIVKFRRRKHSRKQQGHRQWFTEVKITGIQA.

The protein belongs to the bacterial ribosomal protein bL21 family. In terms of assembly, part of the 50S ribosomal subunit. Contacts protein L20.

In terms of biological role, this protein binds to 23S rRNA in the presence of protein L20. The polypeptide is Large ribosomal subunit protein bL21 (Actinobacillus pleuropneumoniae serotype 7 (strain AP76)).